The sequence spans 300 residues: 4-diphosphocytidyl-2-C-methyl-D-erythritol kinase (300 aa).

Residue lysine 22 is part of the active site. 105-115 is an ATP binding site; that stretch reads PMGGGLGGGSS. The active site involves aspartate 147.

This sequence belongs to the GHMP kinase family. IspE subfamily.

It catalyses the reaction 4-CDP-2-C-methyl-D-erythritol + ATP = 4-CDP-2-C-methyl-D-erythritol 2-phosphate + ADP + H(+). It functions in the pathway isoprenoid biosynthesis; isopentenyl diphosphate biosynthesis via DXP pathway; isopentenyl diphosphate from 1-deoxy-D-xylulose 5-phosphate: step 3/6. In terms of biological role, catalyzes the phosphorylation of the position 2 hydroxy group of 4-diphosphocytidyl-2C-methyl-D-erythritol. This Colwellia psychrerythraea (strain 34H / ATCC BAA-681) (Vibrio psychroerythus) protein is 4-diphosphocytidyl-2-C-methyl-D-erythritol kinase.